Here is a 1512-residue protein sequence, read N- to C-terminus: ATP-dependent permease YOR1 (1512 aa).

The interval 1–68 is disordered; that stretch reads MSPLLPTHWG…KGMKETEDGG (68 aa). Polar residues predominate over residues 13 to 29; it reads APQNEPTLPSPSHSVST. Residues 31-65 show a composition bias toward basic and acidic residues; it reads VGDEEKLRRSEGSDGEDRINLDSNKYDVKGMKETE. 5 helical membrane-spanning segments follow: residues 229–249, 288–308, 363–385, 475–495, and 507–527; these read ASLA…AGFI, GPGI…SLGM, FAAG…IIIL, GMTA…FITY, and IFTV…WPMT. In terms of domain architecture, ABC transmembrane type-1 1 spans 246–533; sequence AGFIKVFGDT…WPMTLSSTAD (288 aa). The interval 594–656 is disordered; the sequence is VLNGGKPGGP…SAPGIDEEIS (63 aa). The span at 619-643 shows a compositional bias: low complexity; that stretch reads AEEIQAETAAGQPGAGEASAEGQGQ. Residues 651-871 enclose the ABC transporter 1 domain; sequence IDEEISEKKE…NGAFAKLIKE (221 aa). 683–690 contacts ATP; it reads GAIGSGKS. Transmembrane regions (helical) follow at residues 937–957, 974–994, 1067–1087, and 1167–1187; these read GVFM…FYVI, NGFY…ALFF, VILL…VSLL, and FLGS…SSVS. Residues 943–1217 form the ABC transmembrane type-1 2 domain; that stretch reads LLFFCIVVAQ…LVRQIAEVEN (275 aa). An ABC transporter 2 domain is found at 1255 to 1496; it reads IEFKDVRMRY…GGIFTEMCSK (242 aa). 1289–1296 contacts ATP; the sequence is GRTGAGKS.

The protein belongs to the ABC transporter superfamily. ABCC family. Conjugate transporter (TC 3.A.1.208) subfamily.

The protein resides in the extracellular vesicle membrane. It localises to the secreted. Its function is as follows. Transmembrane transporter. May play a role in the packaging or formation of extracellular vesicles (EVs), and in the export of virulence factors from EVs. Required for efficient non-lytic exocytosis from host macrophages, the process by which the yeast escapes host macrophages with both host cell and pathogen remaining viable. This Cryptococcus neoformans var. grubii serotype A (strain H99 / ATCC 208821 / CBS 10515 / FGSC 9487) (Filobasidiella neoformans var. grubii) protein is ATP-dependent permease YOR1.